Here is a 159-residue protein sequence, read N- to C-terminus: Phosphopantetheine adenylyltransferase (159 aa).

Residue serine 9 coordinates substrate. ATP is bound by residues 9-10 and histidine 17; that span reads SF. Substrate-binding residues include lysine 41, leucine 73, and lysine 87. Residues 88-90, glutamate 98, and 122-128 contribute to the ATP site; these read GLR and YSFLSSS.

The protein belongs to the bacterial CoaD family. As to quaternary structure, homohexamer. It depends on Mg(2+) as a cofactor.

The protein localises to the cytoplasm. It catalyses the reaction (R)-4'-phosphopantetheine + ATP + H(+) = 3'-dephospho-CoA + diphosphate. It functions in the pathway cofactor biosynthesis; coenzyme A biosynthesis; CoA from (R)-pantothenate: step 4/5. Reversibly transfers an adenylyl group from ATP to 4'-phosphopantetheine, yielding dephospho-CoA (dPCoA) and pyrophosphate. The chain is Phosphopantetheine adenylyltransferase from Streptomyces avermitilis (strain ATCC 31267 / DSM 46492 / JCM 5070 / NBRC 14893 / NCIMB 12804 / NRRL 8165 / MA-4680).